The sequence spans 84 residues: Beta-defensin 119 (84 aa).

An N-terminal signal peptide occupies residues methionine 1–glycine 21. Intrachain disulfides connect cysteine 28/cysteine 55, cysteine 35/cysteine 49, and cysteine 39/cysteine 56.

Belongs to the beta-defensin family. In terms of tissue distribution, abundant expression in the male reproductive tract only. Abundant expressed in testis and the caput region of epididymis, but low in the corpus region.

It localises to the secreted. In terms of biological role, has antibacterial activity. The protein is Beta-defensin 119 (DEFB119) of Homo sapiens (Human).